A 708-amino-acid polypeptide reads, in one-letter code: Ion-translocating oxidoreductase complex subunit C (708 aa).

2 4Fe-4S ferredoxin-type domains span residues 369 to 397 (GEPQ…QQLY) and 407 to 436 (KATT…VQYF). [4Fe-4S] cluster contacts are provided by Cys-377, Cys-380, Cys-383, Cys-387, Cys-416, Cys-419, Cys-422, and Cys-426. Positions 599–686 (KARKLEQQQS…EEQVDPRKAA (88 aa)) are disordered.

It belongs to the 4Fe4S bacterial-type ferredoxin family. RnfC subfamily. The complex is composed of six subunits: RsxA, RsxB, RsxC, RsxD, RsxE and RsxG. Requires [4Fe-4S] cluster as cofactor.

The protein resides in the cell inner membrane. Part of a membrane-bound complex that couples electron transfer with translocation of ions across the membrane. Required to maintain the reduced state of SoxR. In Escherichia coli (strain 55989 / EAEC), this protein is Ion-translocating oxidoreductase complex subunit C.